A 476-amino-acid chain; its full sequence is Aspartyl/glutamyl-tRNA(Asn/Gln) amidotransferase subunit B (476 aa).

Belongs to the GatB/GatE family. GatB subfamily. Heterotrimer of A, B and C subunits.

The catalysed reaction is L-glutamyl-tRNA(Gln) + L-glutamine + ATP + H2O = L-glutaminyl-tRNA(Gln) + L-glutamate + ADP + phosphate + H(+). It catalyses the reaction L-aspartyl-tRNA(Asn) + L-glutamine + ATP + H2O = L-asparaginyl-tRNA(Asn) + L-glutamate + ADP + phosphate + 2 H(+). Its function is as follows. Allows the formation of correctly charged Asn-tRNA(Asn) or Gln-tRNA(Gln) through the transamidation of misacylated Asp-tRNA(Asn) or Glu-tRNA(Gln) in organisms which lack either or both of asparaginyl-tRNA or glutaminyl-tRNA synthetases. The reaction takes place in the presence of glutamine and ATP through an activated phospho-Asp-tRNA(Asn) or phospho-Glu-tRNA(Gln). In Neisseria meningitidis serogroup C / serotype 2a (strain ATCC 700532 / DSM 15464 / FAM18), this protein is Aspartyl/glutamyl-tRNA(Asn/Gln) amidotransferase subunit B.